A 318-amino-acid polypeptide reads, in one-letter code: MDIDRNRLRTGLPQVGVQPYRQVHAHSTGNRNSTVQNEADYHWRKDPELGFFSHVVGNFRIMQVGPVNNGSWDVGGGWNAETYAAVELIESHSTKEEFMADYRLYIELLRNLADEAGLPKTLDTDDLAGIKTHEYCTNNQPNNHSDHVDPYPYLASWGISREQFKQDIENGLSAATGWQKNGTGYWYVHSDGSYSKDKFEKINGTWYYFDGSGYMLSDRWKKHTDGNWYYFDQSGEMATGWKKIADKWYYFDVEGAMKTGWVKYKDTWYYLDAKEGAMVSNAFIQSADGTGWYYLKPDGTLADKPEFTVEPDGLITVK.

The N-acetylmuramoyl-L-alanine amidase domain occupies 19–151 (PYRQVHAHST…NNHSDHVDPY (133 aa)). Cell wall-binding repeat units follow at residues 175–194 (ATGW…DGSY), 196–215 (KDKF…SGYM), 217–237 (SDRW…SGEM), 238–257 (ATGW…EGAM), 258–277 (KTGW…KEGA), and 280–301 (SNAF…DGTL).

The protein belongs to the N-acetylmuramoyl-L-alanine amidase 2 family.

The protein localises to the secreted. It catalyses the reaction Hydrolyzes the link between N-acetylmuramoyl residues and L-amino acid residues in certain cell-wall glycopeptides.. The protein is Lytic amidase (HBL) of Streptococcus pneumoniae phage HB-3.